Reading from the N-terminus, the 194-residue chain is 3-isopropylmalate dehydratase small subunit (194 aa).

It belongs to the LeuD family. LeuD type 1 subfamily. Heterodimer of LeuC and LeuD.

It carries out the reaction (2R,3S)-3-isopropylmalate = (2S)-2-isopropylmalate. The protein operates within amino-acid biosynthesis; L-leucine biosynthesis; L-leucine from 3-methyl-2-oxobutanoate: step 2/4. Catalyzes the isomerization between 2-isopropylmalate and 3-isopropylmalate, via the formation of 2-isopropylmaleate. In Anoxybacillus flavithermus (strain DSM 21510 / WK1), this protein is 3-isopropylmalate dehydratase small subunit.